Consider the following 201-residue polypeptide: Pyridoxal 5'-phosphate synthase subunit PdxT (201 aa).

49 to 51 (GES) lines the L-glutamine pocket. The Nucleophile role is filled by cysteine 81. L-glutamine-binding positions include arginine 110 and 139 to 140 (IR). Catalysis depends on charge relay system residues histidine 180 and glutamate 182.

The protein belongs to the glutaminase PdxT/SNO family. As to quaternary structure, in the presence of PdxS, forms a dodecamer of heterodimers. Only shows activity in the heterodimer.

The enzyme catalyses aldehydo-D-ribose 5-phosphate + D-glyceraldehyde 3-phosphate + L-glutamine = pyridoxal 5'-phosphate + L-glutamate + phosphate + 3 H2O + H(+). The catalysed reaction is L-glutamine + H2O = L-glutamate + NH4(+). The protein operates within cofactor biosynthesis; pyridoxal 5'-phosphate biosynthesis. Functionally, catalyzes the hydrolysis of glutamine to glutamate and ammonia as part of the biosynthesis of pyridoxal 5'-phosphate. The resulting ammonia molecule is channeled to the active site of PdxS. The chain is Pyridoxal 5'-phosphate synthase subunit PdxT from Salinispora arenicola (strain CNS-205).